We begin with the raw amino-acid sequence, 336 residues long: DNA repair protein XRCC4 (336 aa).

Residues 1 to 213 (MERKISRIHL…EREKDIKQEG (213 aa)) are interaction with IFFO1. Phosphoserine; by PRKDC is present on Ser-53. Coiled-coil stretches lie at residues 131–165 (LDTIAENQAKNEHLQKENERLLRDWNDVQGRFEKC) and 184–212 (LNEKKTKIRSLHNKLLNAAQEREKDIKQE). The segment at 180–213 (FILVLNEKKTKIRSLHNKLLNAAQEREKDIKQEG) is interaction with LIG4. At Ser-193 the chain carries Phosphoserine; by PRKDC. Lys-210 participates in a covalent cross-link: Glycyl lysine isopeptide (Lys-Gly) (interchain with G-Cter in SUMO). Residues 212–249 (EGETAICSEMTADRDPVYDESTDEESENQTDLSGLASA) are disordered. Residue Tyr-229 is modified to Phosphotyrosine. The span at 229–239 (YDESTDEESEN) shows a compositional bias: acidic residues. A Phosphoserine modification is found at Ser-232. Thr-233 carries the post-translational modification Phosphothreonine; by CK2. A phosphoserine mark is found at Ser-237 and Ser-256. Ser-260 is subject to Phosphoserine; by PRKDC. The segment at 264–336 (TDIAPSRKRR…SSPEDLFDEI (73 aa)) is disordered. Residues 270–275 (RKRRQR) carry the Nuclear localization signal motif. Lys-296 participates in a covalent cross-link: Glycyl lysine isopeptide (Lys-Gly) (interchain with G-Cter in ubiquitin). Phosphoserine; by PRKDC is present on residues Ser-303, Ser-304, Ser-315, and Ser-320. Polar residues predominate over residues 317–329 (ENMSLETLRNSSP). Thr-323 is modified (phosphothreonine; by PRKDC). Phosphoserine; by PRKDC is present on residues Ser-327 and Ser-328.

It belongs to the XRCC4-XLF family. XRCC4 subfamily. In terms of assembly, homodimer and homotetramer in solution. Interacts with NHEJ1/XLF; the interaction is direct and is mediated via a head-to-head interaction between N-terminal head regions. Interacts with LIG4; the LIG4-XRCC4 subcomplex has a 1:2 stoichiometry and XRCC4 is required for LIG4 stability. Component of the core long-range non-homologous end joining (NHEJ) complex (also named DNA-PK complex) composed of PRKDC, LIG4, XRCC4, XRCC6/Ku70, XRCC5/Ku86 and NHEJ1/XLF. Additional component of the NHEJ complex includes PAXX. Following autophosphorylation, PRKDC dissociates from DNA, leading to formation of the short-range NHEJ complex, composed of LIG4, XRCC4, XRCC6/Ku70, XRCC5/Ku86 and NHEJ1/XLF. Interacts with PRKDC; the interaction is direct. Interacts with XRCC6/Ku70; the interaction is direct. Interacts with APTX and APLF. Forms a heterotetramer with IFFO1; the interaction involves LIG4-free XRCC4 and leads to the relocalization of IFFO1 to the sites of DNA damage. Interacts with PNKP; mainly interacts with PNKP when phosphorylated at Thr-233, but is also able to interact at much lower level with PNKP when not unphosphorylated. Interacts with POLL (DNA polymerase lambda). Interacts with XKR4; interacts with the processed form of XKR4, which is cleaved by caspase. Post-translationally, phosphorylated by PRKDC at the C-terminus in response to DNA damage; Ser-260 and Ser-320 constitute the main phosphorylation sites. Phosphorylations by PRKDC at the C-terminus of XRCC4 and NHEJ1/XLF are highly redundant and regulate ability of the XRCC4-NHEJ1/XLF subcomplex to bridge DNA. Phosphorylation by PRKDC does not prevent interaction with NHEJ1/XLF but disrupts ability to bridge DNA and promotes detachment from DNA. Phosphorylation at Ser-327 and Ser-328 by PRKDC promotes recognition by the SCF(FBXW7) complex and subsequent ubiquitination via 'Lys-63'-linked ubiquitin. Phosphorylation at Thr-233 by CK2 promotes interaction with PNKP; regulating PNKP activity and localization to DNA damage sites. Phosphorylation by CK2 promotes interaction with APTX. In terms of processing, ubiquitinated at Lys-296 by the SCF(FBXW7) complex via 'Lys-63'-linked ubiquitination, thereby promoting double-strand break repair: the SCF(FBXW7) complex specifically recognizes XRCC4 when phosphorylated at Ser-327 and Ser-328 by PRKDC, and 'Lys-63'-linked ubiquitination facilitates DNA non-homologous end joining (NHEJ) by enhancing association with XRCC5/Ku80 and XRCC6/Ku70. Monoubiquitinated. Undergoes proteolytic processing by caspase-3 (CASP3). This generates the protein XRCC4, C-terminus (XRCC4/C), which translocates to the cytoplasm and activates phospholipid scramblase activity of XKR4, thereby promoting phosphatidylserine exposure on apoptotic cell surface. Widely expressed.

The protein localises to the nucleus. The protein resides in the chromosome. Its subcellular location is the cytoplasm. Its function is as follows. DNA non-homologous end joining (NHEJ) core factor, required for double-strand break repair and V(D)J recombination. Acts as a scaffold protein that regulates recruitment of other proteins to DNA double-strand breaks (DSBs). Associates with NHEJ1/XLF to form alternating helical filaments that bridge DNA and act like a bandage, holding together the broken DNA until it is repaired. The XRCC4-NHEJ1/XLF subcomplex binds to the DNA fragments of a DSB in a highly diffusive manner and robustly bridges two independent DNA molecules, holding the broken DNA fragments in close proximity to one other. The mobility of the bridges ensures that the ends remain accessible for further processing by other repair factors. Plays a key role in the NHEJ ligation step of the broken DNA during DSB repair via direct interaction with DNA ligase IV (LIG4): the LIG4-XRCC4 subcomplex reseals the DNA breaks after the gap filling is completed. XRCC4 stabilizes LIG4, regulates its subcellular localization and enhances LIG4's joining activity. Binding of the LIG4-XRCC4 subcomplex to DNA ends is dependent on the assembly of the DNA-dependent protein kinase complex DNA-PK to these DNA ends. Promotes displacement of PNKP from processed strand break termini. In terms of biological role, acts as an activator of the phospholipid scramblase activity of XKR4. This form, which is generated upon caspase-3 (CASP3) cleavage, translocates into the cytoplasm and interacts with XKR4, thereby promoting phosphatidylserine scramblase activity of XKR4 and leading to phosphatidylserine exposure on apoptotic cell surface. This chain is DNA repair protein XRCC4, found in Homo sapiens (Human).